The following is a 281-amino-acid chain: MTARALHYVFKVANRAKTIDFYTKILEMKVLRHEEFDKGCEASCNGPYDERWSKTMIGYGSEDEHFVLELTYNYPIHKYELGNDYRAIVIDSDQLFDKISRIDHRKSGCGRLAVKDPDGHEFKIGKADHAPKVLRVQLNVGDLEKSKKYWNELLGMGIVEEKKTRVRLSFGEGQCELEIVQSGEKIDRKTGFGRIAFSLPGEKLQPLQDKIKSANGTIINELLTLKTPGKADVQVVILADPDAHEICFVGDEGFRDLSKIDDAAEKELREQIQKDDSEKWY.

2 consecutive VOC domains span residues 4-127 and 132-251; these read RALH…IGKA and KVLR…FVGD.

It belongs to the glyoxalase I family.

Functionally, thought to act as a glyoxalase. May remove methylglyoxal from mitochondrial proteins. Has roles in reducing oxidative stress and increasing lifespan. This chain is Glyoxalase 1, found in Caenorhabditis briggsae.